The following is a 255-amino-acid chain: MRPTVLCFSGLDPSGGAGLQADIEAIGQSGAHAAIACTALTIQNSQQVFGFEATSKELLLAQANAVVGDLPIKCVKSGMLGTTDNIAALAEFLRAHPDYQYVLDPVLVANSGGSLGDQATLVKAFVELIPLATLITPNTVELRALTGVTDLDQATQKLFEMGAKAVLVKGGHEDTPDFIKNSLYIDGELAASSTCPRLEGEYHGSGCSLASFIAGRLALGDSLKIAVQHAETWLFGVLKNAETPVLNGQKIPKRF.

3 residues coordinate pyridoxal 5'-phosphate: Gly18, Gln43, and Asn110. Gln43 serves as a coordination point for 4-amino-5-hydroxymethyl-2-methylpyrimidine. Cys195 and Cys207 are oxidised to a cystine. Residue Ser208 participates in pyridoxal 5'-phosphate binding.

The protein belongs to the ThiD family. Homodimer. In terms of processing, crystals show a disulfide bond between Cys-195 and Cys-207. This disulfide is possibly an artifact of the purification and crystallization conditions. However, as it is adjacent to the conserved GSGC of the oxyanion hole, this disulfide may help to orient the backbone amides toward the oxanion intermediate.

It catalyses the reaction 4-amino-5-hydroxymethyl-2-methylpyrimidine + ATP = 4-amino-2-methyl-5-(phosphooxymethyl)pyrimidine + ADP + H(+). The protein operates within cofactor biosynthesis; thiamine diphosphate biosynthesis. With respect to regulation, inhibited by pyridoxal phosphate at high micromolar concentrations. Its function is as follows. Catalyzes the phosphorylation of hydroxymethylpyrimidine (HMP) to hydroxymethylpyrimidine phosphate (HMP-P). Unlike other HMPKs, it cannot catalyze the phosphorylation of HMP-P to generate the diphosphate HMP-PP. Shows no activity with pyridoxal, pyridoxamine or pyridoxine. Does not show phosphatase activity. This chain is Hydroxylmethylpyrimidine kinase, found in Acinetobacter baumannii (strain IS-123).